Here is a 663-residue protein sequence, read N- to C-terminus: Translation factor GUF1, mitochondrial (663 aa).

The transit peptide at 1-37 (MRGCLQSVRLLTTALGQSPRRPLPFAFRLPPNASRLF) directs the protein to the mitochondrion. The region spanning 65-245 (ERYRNFCIVA…TIVEQIPAPI (181 aa)) is the tr-type G domain. GTP is bound by residues 74 to 81 (AHVDHGKS), 138 to 142 (DTPGH), and 192 to 195 (NKVD).

Belongs to the TRAFAC class translation factor GTPase superfamily. Classic translation factor GTPase family. LepA subfamily.

It localises to the mitochondrion inner membrane. It carries out the reaction GTP + H2O = GDP + phosphate + H(+). Functionally, promotes mitochondrial protein synthesis. May act as a fidelity factor of the translation reaction, by catalyzing a one-codon backward translocation of tRNAs on improperly translocated ribosomes. Binds to mitochondrial ribosomes in a GTP-dependent manner. The protein is Translation factor GUF1, mitochondrial of Uncinocarpus reesii (strain UAMH 1704).